An 850-amino-acid chain; its full sequence is MASSRAQWFNPIAFTPWPVTCITTIVYLALLIPILVINLVVPSAPETNPKGVNLTEAWRDLQHLTGGFHPYNSRRNDEVHEWLLSRINSIIRPTVEAGQPSSANDNLPEVFVFDDNRSNLTYSNGGVGKTSIVGVYFESTNIIVYIRGSEDGLENWWEHSNGKPKGKGGVLVNAHYDSVSTGYGATDDGIGVVSLLQLLRYFTTPGNNPRKGLVLLFNNGEEDYLNGAHPPEADTTQAQDDTRHTNIDSLWHMLSASIGTTEGLVSYTGMDFDGKSKDQNKVNSGTGTLGVWFDMFGTAFAVFRLHTLFAISVALLVIAPLVIFVTSVILSKTDRMYLFSMSKSLEGTGDQVSLRGLRGFSRTPIILVIATTIPICLAYLLEKVNPYIVHSSQFSVWSMMFSAWIFLAWFLACAADFFRPSALHRAYSYTWIFIATWIMLVINTVYANQKGIAAGPSTAEFPGAAGEDTDPTESTSLLRGQRTTFANYRSSRPGGAAETDEREDINKGGTFEHEQSWSWTLPRWTWVLQLLLLAPIVLILVGQLALFLTASMCQVGSDGVSTFVVYLACSVFTTLLCIPLFPLIHRFTYHIPTFLFLVFIGTLIYNLVAFPFSPANRLKTFFIQEVDLDNGSNTVSLTGIQPYLTDAINSIPSAAGQNITCDKTTPFGKLERCSWSGLSPNVLGQGRERDNEIDPDKWITYNITKTVGKNKARIEISGRNTRACKLKFDRAVANFQVSGSAVDHRMPPTSRQGVSEIRLWSRTWENTWVVDINWHESADKSDDDDDDHDDENHDAPQNILSGKAICMWSDGNQPGVIPALDEVRLYAPSWIAISKAADGLVEASHSFTIQ.

Topologically, residues 1–20 are cytoplasmic; the sequence is MASSRAQWFNPIAFTPWPVT. The helical transmembrane segment at 21–41 threads the bilayer; that stretch reads CITTIVYLALLIPILVINLVV. Over 42–282 the chain is Vacuolar; that stretch reads PSAPETNPKG…DGKSKDQNKV (241 aa). 3 N-linked (GlcNAc...) asparagine glycosylation sites follow: Asn-53, Asn-116, and Asn-119. Zn(2+) contacts are provided by His-175 and Asp-187. Glu-221 (proton acceptor) is an active-site residue. Residue Glu-222 coordinates Zn(2+). The chain crosses the membrane as a helical span at residues 283-303; the sequence is NSGTGTLGVWFDMFGTAFAVF. At 304–308 the chain is on the cytoplasmic side; it reads RLHTL. A helical transmembrane segment spans residues 309–329; that stretch reads FAISVALLVIAPLVIFVTSVI. Residues 330–363 are Vacuolar-facing; it reads LSKTDRMYLFSMSKSLEGTGDQVSLRGLRGFSRT. A helical transmembrane segment spans residues 364-384; sequence PIILVIATTIPICLAYLLEKV. Residues 385 to 393 are Cytoplasmic-facing; it reads NPYIVHSSQ. The helical transmembrane segment at 394–414 threads the bilayer; that stretch reads FSVWSMMFSAWIFLAWFLACA. Over 415–425 the chain is Vacuolar; that stretch reads ADFFRPSALHR. A helical transmembrane segment spans residues 426-446; the sequence is AYSYTWIFIATWIMLVINTVY. Residues 447 to 529 are Cytoplasmic-facing; it reads ANQKGIAAGP…TLPRWTWVLQ (83 aa). Residues 530–550 traverse the membrane as a helical segment; the sequence is LLLLAPIVLILVGQLALFLTA. Residues 551–563 are Vacuolar-facing; sequence SMCQVGSDGVSTF. A helical transmembrane segment spans residues 564-584; sequence VVYLACSVFTTLLCIPLFPLI. Residues 585 to 590 lie on the Cytoplasmic side of the membrane; the sequence is HRFTYH. The chain crosses the membrane as a helical span at residues 591–611; the sequence is IPTFLFLVFIGTLIYNLVAFP. At 612 to 850 the chain is on the vacuolar side; sequence FSPANRLKTF…VEASHSFTIQ (239 aa). N-linked (GlcNAc...) asparagine glycans are attached at residues Asn-630, Asn-658, and Asn-702.

This sequence belongs to the peptidase M28 family. The cofactor is Zn(2+).

Its subcellular location is the vacuole membrane. Functionally, may be involved in vacuolar sorting and osmoregulation. The chain is Vacuolar membrane protease from Ajellomyces capsulatus (strain NAm1 / WU24) (Darling's disease fungus).